The following is a 614-amino-acid chain: 1-deoxy-D-xylulose-5-phosphate synthase (614 aa).

Residues His74 and 115 to 117 (GHS) each bind thiamine diphosphate. Asp146 serves as a coordination point for Mg(2+). Thiamine diphosphate contacts are provided by residues 147–148 (GA), Asn175, Tyr282, and Glu363. Asn175 is a Mg(2+) binding site.

It belongs to the transketolase family. DXPS subfamily. As to quaternary structure, homodimer. The cofactor is Mg(2+). It depends on thiamine diphosphate as a cofactor.

It catalyses the reaction D-glyceraldehyde 3-phosphate + pyruvate + H(+) = 1-deoxy-D-xylulose 5-phosphate + CO2. Its pathway is metabolic intermediate biosynthesis; 1-deoxy-D-xylulose 5-phosphate biosynthesis; 1-deoxy-D-xylulose 5-phosphate from D-glyceraldehyde 3-phosphate and pyruvate: step 1/1. Functionally, catalyzes the acyloin condensation reaction between C atoms 2 and 3 of pyruvate and glyceraldehyde 3-phosphate to yield 1-deoxy-D-xylulose-5-phosphate (DXP). The chain is 1-deoxy-D-xylulose-5-phosphate synthase from Methylobacillus flagellatus (strain ATCC 51484 / DSM 6875 / VKM B-1610 / KT).